The sequence spans 253 residues: DnaJ homolog subfamily C member 8 (253 aa).

An N-acetylalanine modification is found at alanine 2. Serine 35 is subject to Phosphoserine. One can recognise a J domain in the interval asparagine 57 to glutamine 124. The residue at position 146 (lysine 146) is an N6-acetyllysine. Positions glutamate 181–serine 222 are enriched in basic and acidic residues. The tract at residues glutamate 181–glutamate 253 is disordered. Short sequence motifs (nuclear localization signal) lie at residues lysine 189 to arginine 192 and lysine 203 to arginine 206. Residue serine 222 is modified to Phosphoserine. A compositionally biased stretch (basic residues) spans lysine 231–threonine 240. Positions glycine 232–glutamate 253 are essential for polyglutamine aggregation suppression.

In terms of assembly, interacts with SRPK1. Interacts with HSP70 (HSPA1A or HSPA1B).

It is found in the nucleus. In terms of biological role, suppresses polyglutamine (polyQ) aggregation of ATXN3 in neuronal cells. The polypeptide is DnaJ homolog subfamily C member 8 (Dnajc8) (Mus musculus (Mouse)).